A 610-amino-acid polypeptide reads, in one-letter code: UvrABC system protein C (610 aa).

The region spanning 16–94 is the GIY-YIG domain; the sequence is SQPGVYRMYD…IKLYQPRYNV (79 aa). The UVR domain maps to 204-239; that stretch reads DQVLTQLIARMEKASQDLAFEEAARIRDQIQAVRRV.

This sequence belongs to the UvrC family. In terms of assembly, interacts with UvrB in an incision complex.

The protein localises to the cytoplasm. Its function is as follows. The UvrABC repair system catalyzes the recognition and processing of DNA lesions. UvrC both incises the 5' and 3' sides of the lesion. The N-terminal half is responsible for the 3' incision and the C-terminal half is responsible for the 5' incision. The sequence is that of UvrABC system protein C from Salmonella schwarzengrund (strain CVM19633).